We begin with the raw amino-acid sequence, 137 residues long: MNDGQFLFQRNDPIILYTFLLKSNYTVFRSIDERLCDFVFYIDHFLNKRISYRIPILIRNNNTNILNNCPSSFPPLVDLVGHRLVAAEDNPVAVDLVDNNLVVVDLVDNNLAVGVLVGSNLVVGSLVFALLTCFEDG.

A helical membrane pass occupies residues 111-131 (LAVGVLVGSNLVVGSLVFALL).

The protein localises to the membrane. This is an uncharacterized protein from Saccharomyces cerevisiae (strain ATCC 204508 / S288c) (Baker's yeast).